The primary structure comprises 279 residues: Phosphatidylglycerol--prolipoprotein diacylglyceryl transferase (279 aa).

Transmembrane regions (helical) follow at residues Leu18–Ala38, Ile55–Gln75, and Ile89–Ile109. Arg137 provides a ligand contact to a 1,2-diacyl-sn-glycero-3-phospho-(1'-sn-glycerol). The next 2 membrane-spanning stretches (helical) occupy residues Leu203–Gly223 and Ile235–Tyr255.

Belongs to the Lgt family.

Its subcellular location is the cell membrane. It catalyses the reaction L-cysteinyl-[prolipoprotein] + a 1,2-diacyl-sn-glycero-3-phospho-(1'-sn-glycerol) = an S-1,2-diacyl-sn-glyceryl-L-cysteinyl-[prolipoprotein] + sn-glycerol 1-phosphate + H(+). Its pathway is protein modification; lipoprotein biosynthesis (diacylglyceryl transfer). In terms of biological role, catalyzes the transfer of the diacylglyceryl group from phosphatidylglycerol to the sulfhydryl group of the N-terminal cysteine of a prolipoprotein, the first step in the formation of mature lipoproteins. This is Phosphatidylglycerol--prolipoprotein diacylglyceryl transferase from Staphylococcus aureus (strain bovine RF122 / ET3-1).